The chain runs to 484 residues: uncharacterized protein (484 aa).

Residues 47 to 226 (TLPIPAAVVK…TEVTVKIFKF (180 aa)) form the FAD-binding PCMH-type domain.

Belongs to the FAD-binding oxidoreductase/transferase type 4 family.

This is an uncharacterized protein from Escherichia coli O157:H7.